Reading from the N-terminus, the 406-residue chain is Cysteine desulfurase (406 aa).

Residue Lys226 is modified to N6-(pyridoxal phosphate)lysine. Catalysis depends on Cys364, which acts as the Cysteine persulfide intermediate.

Belongs to the class-V pyridoxal-phosphate-dependent aminotransferase family. Csd subfamily. Homodimer. Interacts with SufE and the SufBCD complex composed of SufB, SufC and SufD. The interaction with SufE is required to mediate the direct transfer of the sulfur atom from the S-sulfanylcysteine. It depends on pyridoxal 5'-phosphate as a cofactor.

The protein localises to the cytoplasm. It carries out the reaction (sulfur carrier)-H + L-cysteine = (sulfur carrier)-SH + L-alanine. The enzyme catalyses L-selenocysteine + AH2 = hydrogenselenide + L-alanine + A + H(+). The protein operates within cofactor biosynthesis; iron-sulfur cluster biosynthesis. Cysteine desulfurases mobilize the sulfur from L-cysteine to yield L-alanine, an essential step in sulfur metabolism for biosynthesis of a variety of sulfur-containing biomolecules. Component of the suf operon, which is activated and required under specific conditions such as oxidative stress and iron limitation. Acts as a potent selenocysteine lyase in vitro, that mobilizes selenium from L-selenocysteine. Selenocysteine lyase activity is however unsure in vivo. In Escherichia fergusonii (strain ATCC 35469 / DSM 13698 / CCUG 18766 / IAM 14443 / JCM 21226 / LMG 7866 / NBRC 102419 / NCTC 12128 / CDC 0568-73), this protein is Cysteine desulfurase.